We begin with the raw amino-acid sequence, 538 residues long: Aldehyde dehydrogenase family 2 member B4, mitochondrial (538 aa).

The N-terminal 38 residues, 1-38 (MAARRVSSLLSRSFSASSPLLFRSQGRNCYNGGILRRF), are a transit peptide targeting the mitochondrion. An NAD(+)-binding site is contributed by 282 to 287 (GSTDTG). Residue glutamate 305 is the Proton acceptor of the active site. The active-site Nucleophile is cysteine 339.

It belongs to the aldehyde dehydrogenase family. Homotetramer.

It localises to the mitochondrion matrix. It carries out the reaction an aldehyde + NAD(+) + H2O = a carboxylate + NADH + 2 H(+). Possesses activity on acetaldehyde and glycolaldehyde in vitro. This is Aldehyde dehydrogenase family 2 member B4, mitochondrial (ALDH2B4) from Arabidopsis thaliana (Mouse-ear cress).